Here is a 572-residue protein sequence, read N- to C-terminus: Proline--tRNA ligase (572 aa).

Belongs to the class-II aminoacyl-tRNA synthetase family. ProS type 1 subfamily. In terms of assembly, homodimer.

It localises to the cytoplasm. It catalyses the reaction tRNA(Pro) + L-proline + ATP = L-prolyl-tRNA(Pro) + AMP + diphosphate. Its function is as follows. Catalyzes the attachment of proline to tRNA(Pro) in a two-step reaction: proline is first activated by ATP to form Pro-AMP and then transferred to the acceptor end of tRNA(Pro). As ProRS can inadvertently accommodate and process non-cognate amino acids such as alanine and cysteine, to avoid such errors it has two additional distinct editing activities against alanine. One activity is designated as 'pretransfer' editing and involves the tRNA(Pro)-independent hydrolysis of activated Ala-AMP. The other activity is designated 'posttransfer' editing and involves deacylation of mischarged Ala-tRNA(Pro). The misacylated Cys-tRNA(Pro) is not edited by ProRS. This Yersinia pestis (strain Pestoides F) protein is Proline--tRNA ligase.